We begin with the raw amino-acid sequence, 382 residues long: Sphingoid long-chain base transporter RSB1 (382 aa).

Over 1–34 (MSNATNNTLGSLLPQLEAAANSNSLYGGMVPNLR) the chain is Extracellular. Residues N3 and N6 are each glycosylated (N-linked (GlcNAc...) asparagine). The chain crosses the membrane as a helical span at residues 35 to 55 (FNITMIVIWGILLTIHVVQLL). Residues 56–57 (MR) are Cytoplasmic-facing. The helical transmembrane segment at 58–78 (QYWFSIAFICTGILEVLGYIG) threads the bilayer. At 79–90 (RTWSHSNVADMD) the chain is on the extracellular side. Residues 91-111 (AFLLNMICLTIAPVFTMGGIY) form a helical membrane-spanning segment. The Cytoplasmic segment spans residues 112 to 135 (YQLAKLIEVYGHRFSLLPSPMAYS). Residues 136–156 (FIFICSDIVSLVVQAVGGGLC) form a helical membrane-spanning segment. Residues 157-171 (GVAVTDGTSTTTGNH) lie on the Extracellular side of the membrane. Residues 172–192 (VFIAGLAIQVASMAIFLMLWF) traverse the membrane as a helical segment. Topologically, residues 193-241 (HFLFRIYISVRWEHINSRPISLSLLKISQTEVDYLYREKFHFLRLEPKR) are cytoplasmic. The helical transmembrane segment at 242 to 262 (WVFHYFNLAMTVAVLTIFTRC) threads the bilayer. Over 263–281 (CYRLAELVVGWDGYLITHE) the chain is Extracellular. The chain crosses the membrane as a helical span at residues 282 to 302 (WYFIILDALMMAIATVTLTIF). Residues 303 to 382 (HPGFAFKGRS…LFSSKKKAKL (80 aa)) are Cytoplasmic-facing.

This sequence belongs to the lipid-translocating exporter (LTE) (TC 9.A.26.1) family.

It localises to the cell membrane. Catalyzes the ATP-dependent translocation of sphingoid long-chain bases (LCBs) from the cytoplasmic site toward the extracytoplasmic side of the membrane (flip-flop). Involved in the establishment of the functional lipid asymmetry of the plasma membrane. Regulates intracellular levels of LCBs, sphingolipid precursors that are growth inhibitory at increased levels. The protein is Sphingoid long-chain base transporter RSB1 (RSB1) of Saccharomyces cerevisiae (strain Lalvin EC1118 / Prise de mousse) (Baker's yeast).